The primary structure comprises 204 residues: Urease accessory protein UreG (204 aa).

12–19 (GPVGSGKT) contacts GTP.

This sequence belongs to the SIMIBI class G3E GTPase family. UreG subfamily. Homodimer. UreD, UreF and UreG form a complex that acts as a GTP-hydrolysis-dependent molecular chaperone, activating the urease apoprotein by helping to assemble the nickel containing metallocenter of UreC. The UreE protein probably delivers the nickel.

It is found in the cytoplasm. Its function is as follows. Facilitates the functional incorporation of the urease nickel metallocenter. This process requires GTP hydrolysis, probably effectuated by UreG. This Azotobacter vinelandii (strain DJ / ATCC BAA-1303) protein is Urease accessory protein UreG.